The primary structure comprises 230 residues: Cytidylate kinase (230 aa).

Glycine 11–threonine 19 provides a ligand contact to ATP.

Belongs to the cytidylate kinase family. Type 1 subfamily.

It localises to the cytoplasm. The enzyme catalyses CMP + ATP = CDP + ADP. It carries out the reaction dCMP + ATP = dCDP + ADP. The chain is Cytidylate kinase from Oceanobacillus iheyensis (strain DSM 14371 / CIP 107618 / JCM 11309 / KCTC 3954 / HTE831).